Here is a 145-residue protein sequence, read N- to C-terminus: Large ribosomal subunit protein uL15 (145 aa).

The segment covering 1-30 (MAHSLRKTRKLRGHVSHGHGRIGKHRKHPG) has biased composition (basic residues). Residues 1 to 48 (MAHSLRKTRKLRGHVSHGHGRIGKHRKHPGGRGNAGGQHHHRINRDKY) form a disordered region.

The protein belongs to the universal ribosomal protein uL15 family. Component of the large ribosomal subunit.

The protein resides in the cytoplasm. It localises to the cytosol. Its subcellular location is the rough endoplasmic reticulum. In terms of biological role, component of the large ribosomal subunit. In Oscheius tipulae, this protein is Large ribosomal subunit protein uL15 (rpl-27a).